Reading from the N-terminus, the 256-residue chain is MLNLFITSPLDQFEIRVLMGFTSPLLDFSSLNFTTFSLYTIIVLFTVLGLNLLTTNNNKIIGSKWFVSQEAIYDTILNMVKGQIGGKLWGYYFPLVYTFFFFIFVSNLISMIPYSFALSAHLIFIVSLSSVIWLGATIIGLTKHGLVFFSLFVPGGTPLPLVPLLVLIELLSYFARAISLGLRLSSNVLSGHLLLIILGGLLFNLMSMSIITFVFGLIPGVGLLAIVVLEFAISVIQAYVWSILTSSYLKDVLYLH.

A propeptide spans 1 to 7 (removed in mature form); sequence MLNLFIT. 6 helical membrane-spanning segments follow: residues 33–53, 92–112, 122–142, 148–168, 188–208, and 209–229; these read FTTF…LNLL, YFPL…ISMI, LIFI…IGLT, FFSL…LVLI, VLSG…LMSM, and SIIT…IVVL.

Belongs to the ATPase A chain family. As to quaternary structure, F-type ATPases have 2 components, CF(1) - the catalytic core - and CF(0) - the membrane proton channel. CF(1) has five subunits: alpha(3), beta(3), gamma(1), delta(1), epsilon(1). CF(0) has three main subunits: a, b and c.

The protein localises to the mitochondrion inner membrane. Mitochondrial membrane ATP synthase (F(1)F(0) ATP synthase or Complex V) produces ATP from ADP in the presence of a proton gradient across the membrane which is generated by electron transport complexes of the respiratory chain. F-type ATPases consist of two structural domains, F(1) - containing the extramembraneous catalytic core and F(0) - containing the membrane proton channel, linked together by a central stalk and a peripheral stalk. During catalysis, ATP synthesis in the catalytic domain of F(1) is coupled via a rotary mechanism of the central stalk subunits to proton translocation. Key component of the proton channel; it may play a direct role in the translocation of protons across the membrane. This Kluyveromyces lactis (strain ATCC 8585 / CBS 2359 / DSM 70799 / NBRC 1267 / NRRL Y-1140 / WM37) (Yeast) protein is ATP synthase subunit a (ATP6).